A 322-amino-acid polypeptide reads, in one-letter code: NADH-quinone oxidoreductase subunit H (322 aa).

Transmembrane regions (helical) follow at residues 15 to 35 (ILHITLIIIFIIFFAATLSIL), 82 to 102 (IFILSPIIAFVSLLLVIPTIP), 114 to 134 (IGILFFLMMASLSVYAVLFAG), 149 to 169 (ASAQTLSYEVFLGLSLMGVIA), 186 to 206 (VWNVIPQFFGFLCFFIAGIAL), 243 to 263 (ISIITVSALISTVFFGGYFGF), 265 to 285 (GSSFFWLFLKTVFFILIFILI), and 302 to 322 (WKICLPLTLLNLIITAFFILI).

The protein belongs to the complex I subunit 1 family. As to quaternary structure, NDH-1 is composed of 13 different subunits. Subunits NuoA, H, J, K, L, M, N constitute the membrane sector of the complex.

It localises to the cell membrane. The enzyme catalyses a quinone + NADH + 5 H(+)(in) = a quinol + NAD(+) + 4 H(+)(out). Functionally, NDH-1 shuttles electrons from NADH, via FMN and iron-sulfur (Fe-S) centers, to quinones in the respiratory chain. The immediate electron acceptor for the enzyme in this species is believed to be ubiquinone. Couples the redox reaction to proton translocation (for every two electrons transferred, four hydrogen ions are translocated across the cytoplasmic membrane), and thus conserves the redox energy in a proton gradient. This subunit may bind ubiquinone. The protein is NADH-quinone oxidoreductase subunit H of Buchnera aphidicola subsp. Schizaphis graminum (strain Sg).